The primary structure comprises 236 residues: tRNA (guanine-N(7)-)-methyltransferase (236 aa).

S-adenosyl-L-methionine-binding positions include Gly-54, 77–78, 110–111, and Leu-130; these read EI and NA. Asp-133 is a catalytic residue. 208-210 serves as a coordination point for S-adenosyl-L-methionine; it reads TEE.

The protein belongs to the class I-like SAM-binding methyltransferase superfamily. TrmB family.

The protein localises to the nucleus. The catalysed reaction is guanosine(46) in tRNA + S-adenosyl-L-methionine = N(7)-methylguanosine(46) in tRNA + S-adenosyl-L-homocysteine. It functions in the pathway tRNA modification; N(7)-methylguanine-tRNA biosynthesis. Its function is as follows. Catalyzes the formation of N(7)-methylguanine at position 46 (m7G46) in tRNA. In Bombyx mori (Silk moth), this protein is tRNA (guanine-N(7)-)-methyltransferase.